Here is a 283-residue protein sequence, read N- to C-terminus: uncharacterized protein (283 aa).

The segment covering 1–10 has biased composition (polar residues); the sequence is MELNKTSESL. Disordered stretches follow at residues 1 to 99 and 255 to 283; these read MELN…NPTS and DQEG…EAHI. Composition is skewed to basic and acidic residues over residues 14–34, 42–53, and 61–71; these read KIDH…REVR, SSTRQEKADRMP, and ESSKGSEEGAV.

Belongs to the chlamydial CPn_0705/CT_671/TC_0042 family.

This is an uncharacterized protein from Chlamydia trachomatis serovar D (strain ATCC VR-885 / DSM 19411 / UW-3/Cx).